The sequence spans 146 residues: Large ribosomal subunit protein uL15 (146 aa).

A disordered region spans residues 1–54 (MKLHELKPAAGSRKAPKRVGRGTGSGLGRNAGKGEKGQNARSGGGVRPGFEGGQ). Gly residues-rich tracts occupy residues 21–31 (RGTGSGLGRNA) and 42–52 (SGGGVRPGFEG).

This sequence belongs to the universal ribosomal protein uL15 family. In terms of assembly, part of the 50S ribosomal subunit.

Functionally, binds to the 23S rRNA. In Clostridium acetobutylicum (strain ATCC 824 / DSM 792 / JCM 1419 / IAM 19013 / LMG 5710 / NBRC 13948 / NRRL B-527 / VKM B-1787 / 2291 / W), this protein is Large ribosomal subunit protein uL15.